The primary structure comprises 422 residues: UDP-N-acetylglucosamine 1-carboxyvinyltransferase (422 aa).

Residue 22 to 23 (KN) participates in phosphoenolpyruvate binding. Arg93 serves as a coordination point for UDP-N-acetyl-alpha-D-glucosamine. The Proton donor role is filled by Cys117. Cys117 is modified (2-(S-cysteinyl)pyruvic acid O-phosphothioketal). Residues 122–126 (RPVDQ), Asp305, and Ile327 contribute to the UDP-N-acetyl-alpha-D-glucosamine site.

This sequence belongs to the EPSP synthase family. MurA subfamily.

It localises to the cytoplasm. It catalyses the reaction phosphoenolpyruvate + UDP-N-acetyl-alpha-D-glucosamine = UDP-N-acetyl-3-O-(1-carboxyvinyl)-alpha-D-glucosamine + phosphate. It functions in the pathway cell wall biogenesis; peptidoglycan biosynthesis. In terms of biological role, cell wall formation. Adds enolpyruvyl to UDP-N-acetylglucosamine. This is UDP-N-acetylglucosamine 1-carboxyvinyltransferase from Bordetella parapertussis (strain 12822 / ATCC BAA-587 / NCTC 13253).